A 559-amino-acid chain; its full sequence is Leucine-rich repeat-containing protein 71 (559 aa).

A compositionally biased stretch (low complexity) spans methionine 1–glycine 18. Positions methionine 1–tyrosine 56 are disordered. The span at lysine 28 to proline 38 shows a compositional bias: basic and acidic residues. LRR repeat units lie at residues asparagine 172–cysteine 193, threonine 196–methionine 216, threonine 221–glycine 241, threonine 253–aspartate 266, and serine 281–glutamate 302. Basic and acidic residues-rich tracts occupy residues lysine 324–serine 348 and lysine 380–leucine 391. Positions lysine 324–glycine 427 are disordered.

The polypeptide is Leucine-rich repeat-containing protein 71 (LRRC71) (Homo sapiens (Human)).